Reading from the N-terminus, the 101-residue chain is Small ribosomal subunit protein uS14 (101 aa).

Belongs to the universal ribosomal protein uS14 family. In terms of assembly, part of the 30S ribosomal subunit. Contacts proteins S3 and S10.

In terms of biological role, binds 16S rRNA, required for the assembly of 30S particles and may also be responsible for determining the conformation of the 16S rRNA at the A site. This Methylococcus capsulatus (strain ATCC 33009 / NCIMB 11132 / Bath) protein is Small ribosomal subunit protein uS14.